The chain runs to 295 residues: 4-hydroxy-tetrahydrodipicolinate synthase (295 aa).

Thr46 provides a ligand contact to pyruvate. Catalysis depends on Tyr134, which acts as the Proton donor/acceptor. Lys162 functions as the Schiff-base intermediate with substrate in the catalytic mechanism. Ile205 is a pyruvate binding site.

The protein belongs to the DapA family. In terms of assembly, homotetramer; dimer of dimers.

Its subcellular location is the cytoplasm. The catalysed reaction is L-aspartate 4-semialdehyde + pyruvate = (2S,4S)-4-hydroxy-2,3,4,5-tetrahydrodipicolinate + H2O + H(+). Its pathway is amino-acid biosynthesis; L-lysine biosynthesis via DAP pathway; (S)-tetrahydrodipicolinate from L-aspartate: step 3/4. Functionally, catalyzes the condensation of (S)-aspartate-beta-semialdehyde [(S)-ASA] and pyruvate to 4-hydroxy-tetrahydrodipicolinate (HTPA). In Anaeromyxobacter dehalogenans (strain 2CP-1 / ATCC BAA-258), this protein is 4-hydroxy-tetrahydrodipicolinate synthase.